We begin with the raw amino-acid sequence, 248 residues long: 14-3-3 protein (248 aa).

2 coiled-coil regions span residues 13–33 and 91–111; these read MAQL…MRKI and RQKI…LLQE. 135 to 136 is an O-phospho-L-serine binding site; sequence RY. Thr-214 is modified (phosphothreonine). The Putative polyglycylation target motif (T/G)X0-1(D/E)X1-3-G(D/E)X1-2(gE)2-4, where X is polar or negatively charged amino acid, and gE is polyglycylated glutamine signature appears at 237 to 248; it reads TDSAGDDNAEEK. Residue Glu-246 is modified to 5-glutamyl polyglycine.

This sequence belongs to the 14-3-3 family. As to quaternary structure, homodimer. Homodimerizes via N-terminal domains. Oligomerizes forming homotrimers, homotetramers and protein filaments. Oligomerization is hindered by polyglycylation in vivo. Interacts with a large number of both cytosolic and membrane proteins in trophozoites and encysting parasites. Interacts with a serine/threonine protein kinase GL50803_112076 (gCDC7). Component of a multiprotein complex containing gCDC7 and GL50803_94117 (gDBF4), a regulatory subunit of gCDC7, during both the trophozoite and encysting stages of the parasite. Interacts with fructose-bisphosphate aldolase GL50803_11043 (gFBA), pyruvate kinase GL50803_17143 (gPyk), acetyl-CoA synthetase GL50803_13608 (gACS), protein kinase GL50803_22165 (gSTE), DEAD box RNA helicase GL50803_34684 (gVASA) and Golgi/cell cycle associated protein GL50803_17472 (gGCCA). Interacts with actin. Interacts with both monomeric phosphorylated and unphosphorylated actin. The interaction is enhanced by phosphorylation of actin and inhibited by Rho GTPase Rac. Post-translationally, phosphorylated constitutively throughout the life cycle. Phosphorylation is very high in trophozoites and encysting cells of 12 hours. Phosphorylated during excystation. Phosphorylation promotes its binding to various target proteins and is critical for encystation process. Phosphorylation modification is not influenced by polyglycylation modification. In terms of processing, polyglycylated on a glutamate residue, resulting in polyglycine chain on the gamma-carboxyl group. Polyglycylated by the tubulin--tyrosine ligase-like protein GL50803_8456 (gTTLL3). The polyglycine chain is shortened by metallopeptidases of the M20 family, namely dipeptidases GL50803_15832 (gDIP1) and GL50803_8407 (gDIP2). The length of the polyglycine chain is developmental stage-dependent. In trophozoites, glycine residues range from 10 to 31, with the greatest occurrence of 21 residues. In 12 hour encystation stage, glycine residues range from 6 to 22, with the greatest occurrence of 10 residues. The differential rate of polyglycylation/deglycylation during the encystation process regulates the intracellular localization of this protein. Relocalizes partially from the cytoplasm inside the nuclei following the shortening of the polyglycine chain in encysting cells. Polyglycylation modification is not influenced by phosphorylation modification. Polyglycylation prevents oligomerization in vivo.

The protein localises to the cytoplasm. Its subcellular location is the cytoskeleton. The protein resides in the nucleus. It is found in the cell projection. It localises to the cilium. The protein localises to the flagellum. Its subcellular location is the spindle. The protein resides in the nucleus envelope. It is found in the endoplasmic reticulum. Its function is as follows. Adapter protein implicated in the regulation of a large spectrum of both general and specialized signaling pathways. Binds to a large number of partners, usually by recognition of a phosphoserine or phosphothreonine motif. Binding generally results in the modulation of the activity of the binding partner. Binds with varying affinity to various synthetic phosphopeptides having a consensus binding motif RSX(pS/pT)XP, called mode-1, where X is any residue and pS/pT is a phosphorylated serine/threonine, and to synthetic phosphopeptides having a consensus binding motif Xp(S/T)X1-2-COOH, called mode-3, in which the phosphorylated residue occupies the penultimate C-terminal position in the target protein, but does not bind to their unphosphorylated counterparts. Binds to synthetic human RAF1 phosphopeptides, but not to their unphosphorylated forms. Binds to difopein, a polypeptide containing a phosphorylation-independent binding motif. Involved in encystation. Involved in cell proliferation. Required for actin and tubulin cytoskeletal organization. Regulates actin filament formation and nuclear size. This Giardia intestinalis (strain ATCC 50803 / WB clone C6) (Giardia lamblia) protein is 14-3-3 protein.